The primary structure comprises 190 residues: Inner membrane-spanning protein YciB (190 aa).

The next 5 membrane-spanning stretches (helical) occupy residues isoleucine 22 to alanine 42, methionine 50 to aspartate 70, tryptophan 76 to glycine 96, isoleucine 118 to phenylalanine 138, and phenylalanine 148 to isoleucine 168.

The protein belongs to the YciB family.

The protein localises to the cell inner membrane. Functionally, plays a role in cell envelope biogenesis, maintenance of cell envelope integrity and membrane homeostasis. This Vibrio campbellii (strain ATCC BAA-1116) protein is Inner membrane-spanning protein YciB.